A 268-amino-acid chain; its full sequence is MALTKLSLVLFLCFLGLYSETVKSQNCGCAPNLCCSQFGYCGSTDAYCGTGCRSGPCRSPGGTPSPPGGGSVGSIVTQAFFNGIINQAGGGCAGKNFYTRDSFINAANTFPNFANSVTRREIATMFAHFTHETGHFCYIEEINGASRDYCDENNRQYPCAPGKGYFGRGPIQLSWNYNYGACGQSLNLNLLGQPELVSSNPTVAFRTGLWFWMNSVRPVLNQGFGATIRAINGMECNGGNSGAVNARIRYYRDYCGQLGVDPGPNLSC.

An N-terminal signal peptide occupies residues methionine 1 to serine 24. One can recognise a Chitin-binding type-1 domain in the interval glutamine 25 to serine 59. Cystine bridges form between cysteine 27–cysteine 35, cysteine 29–cysteine 41, cysteine 34–cysteine 48, cysteine 52–cysteine 57, cysteine 92–cysteine 137, cysteine 150–cysteine 159, and cysteine 236–cysteine 268. The catalytic stretch occupies residues serine 71–cysteine 268. The active-site Proton donor is glutamate 132. An N-linked (GlcNAc...) asparagine glycan is attached at asparagine 265.

The protein belongs to the glycosyl hydrolase 19 family. Chitinase class I subfamily.

The protein localises to the secreted. Its subcellular location is the extracellular space. It carries out the reaction Random endo-hydrolysis of N-acetyl-beta-D-glucosaminide (1-&gt;4)-beta-linkages in chitin and chitodextrins.. Its function is as follows. Defense against chitin-containing fungal pathogens. The chain is Basic endochitinase CHB4 from Brassica napus (Rape).